Reading from the N-terminus, the 615-residue chain is ABC transporter G family member 22 (615 aa).

The ABC transporter domain occupies 31-279; sequence ITFKDLAYSV…EIGFPFPDQT (249 aa). Position 67–74 (67–74) interacts with ATP; the sequence is GPSGSGKT. The region spanning 364–610 is the ABC transmembrane type-2 domain; the sequence is SNCLVRFAVA…TMVFLCLHYF (247 aa). 6 helical membrane-spanning segments follow: residues 370-390, 400-420, 442-462, 477-497, 508-528, and 587-607; these read FAVA…LGMD, VLFY…SLFI, LALM…LGTI, FFAM…MLII, FAVG…FVPI, and INLI…FLCL.

Belongs to the ABC transporter superfamily. ABCG family. Eye pigment precursor importer (TC 3.A.1.204) subfamily.

It is found in the membrane. Its function is as follows. May be involved in cell migration. The chain is ABC transporter G family member 22 (abcG22) from Dictyostelium discoideum (Social amoeba).